The chain runs to 134 residues: Profilin-2 (134 aa).

Cysteine 13 and cysteine 118 are joined by a disulfide. The Involved in PIP2 interaction signature appears at alanine 84–threonine 100. A Phosphothreonine modification is found at threonine 114.

This sequence belongs to the profilin family. Occurs in many kinds of cells as a complex with monomeric actin in a 1:1 ratio. In terms of processing, phosphorylated by MAP kinases.

It localises to the cytoplasm. Its subcellular location is the cytoskeleton. Functionally, binds to actin and affects the structure of the cytoskeleton. At high concentrations, profilin prevents the polymerization of actin, whereas it enhances it at low concentrations. This is Profilin-2 from Olea europaea (Common olive).